The chain runs to 1375 residues: Capping protein, Arp2/3 and myosin-I linker protein 3 (1375 aa).

Residues 124–151 form a disordered region; it reads IRRGNADTPEGPRDTSPNSETSTSTTHS. The segment covering 138–151 has biased composition (low complexity); it reads TSPNSETSTSTTHS. LRR repeat units follow at residues 244–264, 274–295, 303–323, 335–357, 365–386, 392–413, 424–444, 455–475, 482–501, and 509–530; these read SLEELVLDNAGLKTDFVQKLA, VLHALILSHNPIEDKGFLSLSQ, GLTKLCLAKTAISPRGLQALG, SLRYLDLSKNPGLLATDEANALY, ALVHLDLSGTDCAVDMLLGALL, HLTYLNLARNSCSHRKGREAPP, TLSHVNLSATRLPLEALRALL, DLHLDLSSCELRSAGAQALQE, CIGSLDLSDNGFDSDLLTLV, and SLKHLFLGKNFNVKAKTLEEIL. Disordered regions lie at residues 864–901 and 969–1375; these read RTLSDPPGGASQGQDPSSRGRGRNHDHEETDDELGTNI and KLRH…PGTD. Residues 981 to 997 are compositionally biased toward pro residues; that stretch reads PRTTPPGPGRPSVPVPG. Residues 1007–1022 show a composition bias toward basic and acidic residues; the sequence is RLDEGLEDFFSRRVMD. The segment covering 1047–1062 has biased composition (basic residues); it reads QKKRRRGLFHFRRPRS. Positions 1078 to 1097 are enriched in pro residues; that stretch reads LPPPPPPPPTQESPPSPDPP. The segment covering 1098 to 1108 has biased composition (low complexity); it reads SLGNNSSPCWS. Basic and acidic residues predominate over residues 1219-1229; that stretch reads RRAEATWHIAE. Residues 1233–1244 show a composition bias toward polar residues; the sequence is ANHSCQSPSPAS. The segment covering 1272-1281 has biased composition (pro residues); the sequence is PIGPRPPKPV. A compositionally biased stretch (basic and acidic residues) spans 1348 to 1360; sequence QSCDKLEPDRRQP.

It belongs to the CARMIL family.

It localises to the cytoplasm. The protein localises to the cell membrane. This Mus musculus (Mouse) protein is Capping protein, Arp2/3 and myosin-I linker protein 3 (Carmil3).